Consider the following 268-residue polypeptide: Hydroxyethylthiazole kinase (268 aa).

Methionine 45 contacts substrate. Residues arginine 121 and threonine 167 each contribute to the ATP site. Residue glycine 194 coordinates substrate.

Belongs to the Thz kinase family. Mg(2+) is required as a cofactor.

The catalysed reaction is 5-(2-hydroxyethyl)-4-methylthiazole + ATP = 4-methyl-5-(2-phosphooxyethyl)-thiazole + ADP + H(+). The protein operates within cofactor biosynthesis; thiamine diphosphate biosynthesis; 4-methyl-5-(2-phosphoethyl)-thiazole from 5-(2-hydroxyethyl)-4-methylthiazole: step 1/1. Its function is as follows. Catalyzes the phosphorylation of the hydroxyl group of 4-methyl-5-beta-hydroxyethylthiazole (THZ). The polypeptide is Hydroxyethylthiazole kinase (Bacillus thuringiensis subsp. konkukian (strain 97-27)).